We begin with the raw amino-acid sequence, 247 residues long: Cementoblastoma-derived protein 1 (247 aa).

Polar residues predominate over residues 1 to 28; it reads MGTSSTDSQQAGHRRCSTSNTSAENLTC. Disordered regions lie at residues 1–52 and 147–183; these read MGTS…AGQP and EENS…EKVK.

Post-translationally, phosphorylated. N-glycosylated. In terms of tissue distribution, expressed by cementoblasts, a subpopulation of periodontal ligament cells and cells located around vessels in periodontium (at protein level).

It is found in the cytoplasm. Its subcellular location is the nucleus. Functionally, may play a role in development of the periodontium which surrounds and supports the teeth by promoting the differentiation of multi-potent cells from the periodontal ligament into cementoblasts to form the cementum. Binds hydroxyapatite and may promote the biomineralization of the cementum. Also promotes cell proliferation. The polypeptide is Cementoblastoma-derived protein 1 (Homo sapiens (Human)).